The following is a 1231-amino-acid chain: Protein FAM193A (1231 aa).

The stretch at 106-142 (CTEDMYSTLLQRYQRSEEELRKVAEEWLECQKRIDAY) forms a coiled coil. The segment at 249–272 (DYLSEMRPPSVSSASSGSGSSSPI) is disordered. Residues 258-270 (SVSSASSGSGSSS) show a composition bias toward low complexity. Position 293 is a phosphoserine (serine 293). Disordered stretches follow at residues 331 to 405 (NGGG…QAEQ), 633 to 703 (QSSS…APSF), 719 to 789 (SFCP…NQKE), 826 to 845 (LTKR…EREG), and 860 to 1174 (NSSE…SSLD). Residues 355–365 (EADDEDADGES) show a composition bias toward acidic residues. Serine 648 is modified (phosphoserine). Residues 676–691 (LAPLPALSPSALSPAS) show a composition bias toward low complexity. A compositionally biased stretch (acidic residues) spans 761–773 (QQDDGDESADEDS). The span at 776–785 (EHSSSTSTST) shows a compositional bias: low complexity. Positions 872–881 (AAKRARHKQR) are enriched in basic residues. The stretch at 877–973 (RHKQRKLEEK…ATESISNSEN (97 aa)) forms a coiled coil. Residues 882-909 (KLEEKARLEAEARAREHLHHQEEQKQRE) are compositionally biased toward basic and acidic residues. The segment covering 910 to 920 (EEEDEEEEDEE) has biased composition (acidic residues). The segment covering 921 to 935 (QHFKEEFQRLQELQK) has biased composition (basic and acidic residues). Residues 937-946 (RAAKKKKKDR) are compositionally biased toward basic residues. Polar residues predominate over residues 962 to 979 (QAATESISNSENIHNGSL). A phosphoserine mark is found at serine 1136 and serine 1151. A compositionally biased stretch (basic residues) spans 1156-1166 (GKNKKNKKKKG).

It belongs to the FAM193 family.

The protein is Protein FAM193A (Fam193a) of Mus musculus (Mouse).